Reading from the N-terminus, the 366-residue chain is Autoinducer 2-binding periplasmic protein LuxP (366 aa).

The first 13 residues, 1 to 13, serve as a signal peptide directing secretion; it reads MKKILLTCLLASA.

Belongs to the bacterial solute-binding protein 2 family.

The protein resides in the periplasm. Its function is as follows. Binds to an autoinducer molecule. This complex then interacts with the LuxQ sensor protein. The chain is Autoinducer 2-binding periplasmic protein LuxP (luxP) from Vibrio vulnificus (strain CMCP6).